Reading from the N-terminus, the 81-residue chain is Small ribosomal subunit protein bS16 (81 aa).

Belongs to the bacterial ribosomal protein bS16 family.

The chain is Small ribosomal subunit protein bS16 from Clostridium acetobutylicum (strain ATCC 824 / DSM 792 / JCM 1419 / IAM 19013 / LMG 5710 / NBRC 13948 / NRRL B-527 / VKM B-1787 / 2291 / W).